The following is an 85-amino-acid chain: Putative membrane protein insertion efficiency factor (85 aa).

The protein belongs to the UPF0161 family.

Its subcellular location is the cell membrane. Could be involved in insertion of integral membrane proteins into the membrane. In Buchnera aphidicola subsp. Baizongia pistaciae (strain Bp), this protein is Putative membrane protein insertion efficiency factor.